The following is an 83-amino-acid chain: MKKGLHPESYRPVVFKDMSNGDMFLSKSTVATKETIEFEGETYPLLKIEISNTSHPFYTGKSTLVDTAGRVDKFMSRYGNRKK.

The protein belongs to the bacterial ribosomal protein bL31 family. Type B subfamily. Part of the 50S ribosomal subunit.

This chain is Large ribosomal subunit protein bL31B, found in Bacteroides fragilis (strain ATCC 25285 / DSM 2151 / CCUG 4856 / JCM 11019 / LMG 10263 / NCTC 9343 / Onslow / VPI 2553 / EN-2).